A 341-amino-acid polypeptide reads, in one-letter code: N-acetyl-gamma-glutamyl-phosphate reductase (341 aa).

C145 is a catalytic residue.

The protein belongs to the NAGSA dehydrogenase family. Type 1 subfamily.

The protein localises to the cytoplasm. The enzyme catalyses N-acetyl-L-glutamate 5-semialdehyde + phosphate + NADP(+) = N-acetyl-L-glutamyl 5-phosphate + NADPH + H(+). Its pathway is amino-acid biosynthesis; L-arginine biosynthesis; N(2)-acetyl-L-ornithine from L-glutamate: step 3/4. Its function is as follows. Catalyzes the NADPH-dependent reduction of N-acetyl-5-glutamyl phosphate to yield N-acetyl-L-glutamate 5-semialdehyde. In Methanothrix thermoacetophila (strain DSM 6194 / JCM 14653 / NBRC 101360 / PT) (Methanosaeta thermophila), this protein is N-acetyl-gamma-glutamyl-phosphate reductase.